A 300-amino-acid chain; its full sequence is Enoyl-CoA hydratase domain-containing protein 3, mitochondrial (300 aa).

A mitochondrion-targeting transit peptide spans 1-66 (MAVVAGLRAF…RNIVLSNPRR (66 aa)). Positions 34–53 (GSAGPAGSESEPRLTSTRQQ) are disordered. K110 bears the N6-succinyllysine mark.

The protein belongs to the enoyl-CoA hydratase/isomerase family.

It is found in the mitochondrion. Functionally, may play a role in fatty acid biosynthesis and insulin sensitivity. This chain is Enoyl-CoA hydratase domain-containing protein 3, mitochondrial, found in Mus musculus (Mouse).